The sequence spans 1124 residues: uncharacterized protein (1124 aa).

Residues 1–28 (MALFPRSILIALVLSFVLNLGLVTKIHA) form the signal peptide. The next 7 membrane-spanning stretches (helical) occupy residues 332–352 (IVTAFLTLYVMFFGFKLLLAG), 359–379 (EYINFILKIIFVTYFSIGINI), 393–413 (MIQWAFPFLLNGINGLASWVM), 495–515 (MLVSLALSYPLLVISVAAFMV), 522–542 (MISIVILGILAPLFVPMFLFA), 555–575 (MISFLLQPMVVVTFMITMFAV), and 700–720 (IKNILLALVTACFTLYLMYNF).

This sequence belongs to the TrbL/VirB6 family.

It is found in the cell membrane. This is an uncharacterized protein from Rickettsia prowazekii (strain Madrid E).